Here is a 396-residue protein sequence, read N- to C-terminus: MAEVNVRNFNINFGPQHPAAHGVLRMVLELDGEVVERVDPHIGLLHRGTEKLMETKTYLQAVPYLDRLDYVAPMNQEHAFVLAIEKLLGVEVPKRGQLIRVLFSEIGRILNHLLNVTTQAMDVGALTPPLWGFEQRERLMIFYERACGARLHANYFRPGGVHQDLPESLIEDIGHFIDPFLISLSRLDALVTPNRIFKQRNVDIGVISIDEAWVRGFSGVMIRGAGVPWDLRKSQPYECYDEMEFDIPVGKNSDCYDRYLIRMEEMRQSARIMRQCVDRLLGSEKNGPVSSLNRKVVPPKRSEMKSSMEALIHHFKLYTEGFHTPPGEVYVAVEAPKGEFGVYLISDGTNKPYRVKLRAPGFAHLQAMDFLTRGHMLADATAILGSIDIVFGEVDR.

This sequence belongs to the complex I 49 kDa subunit family. NDH-1 is composed of 14 different subunits. Subunits NuoB, C, D, E, F, and G constitute the peripheral sector of the complex.

It is found in the cell inner membrane. The catalysed reaction is a quinone + NADH + 5 H(+)(in) = a quinol + NAD(+) + 4 H(+)(out). In terms of biological role, NDH-1 shuttles electrons from NADH, via FMN and iron-sulfur (Fe-S) centers, to quinones in the respiratory chain. The immediate electron acceptor for the enzyme in this species is believed to be ubiquinone. Couples the redox reaction to proton translocation (for every two electrons transferred, four hydrogen ions are translocated across the cytoplasmic membrane), and thus conserves the redox energy in a proton gradient. The sequence is that of NADH-quinone oxidoreductase subunit D from Bartonella quintana (strain Toulouse) (Rochalimaea quintana).